The sequence spans 101 residues: Small ribosomal subunit protein uS10 (101 aa).

The protein belongs to the universal ribosomal protein uS10 family. In terms of assembly, part of the 30S ribosomal subunit.

In terms of biological role, involved in the binding of tRNA to the ribosomes. The polypeptide is Small ribosomal subunit protein uS10 (Brachyspira hyodysenteriae (Treponema hyodysenteriae)).